Consider the following 432-residue polypeptide: Elongation factor 1-gamma (432 aa).

Positions 1-82 (LYTYPENWRA…YVSNEELRGS (82 aa)) constitute a GST N-terminal domain. A GST C-terminal domain is found at 83–211 (TPEAAAQVVQ…VKLCEKMAQF (129 aa)). N6-acetyllysine occurs at positions 142 and 207. Positions 216 to 249 (FAESQPKKDTPRKEKGSREEKQKPQAERKEEKKA) are enriched in basic and acidic residues. A disordered region spans residues 216 to 258 (FAESQPKKDTPRKEKGSREEKQKPQAERKEEKKAAAPAPEEEL). Lysine 248 participates in a covalent cross-link: Glycyl lysine isopeptide (Lys-Gly) (interchain with G-Cter in SUMO1). In terms of domain architecture, EF-1-gamma C-terminal spans 271–432 (AKDPFAHLPK…KAFNQGKIFK (162 aa)). A Glycyl lysine isopeptide (Lys-Gly) (interchain with G-Cter in SUMO2) cross-link involves residue lysine 280. Lysine 396 carries the post-translational modification N6-acetyllysine. Lysine 429 bears the N6-acetyllysine; alternate mark. Lysine 429 is modified (N6-malonyllysine; alternate).

In terms of assembly, EF-1 is composed of four subunits: alpha, beta, delta, and gamma.

Its function is as follows. Probably plays a role in anchoring the complex to other cellular components. The chain is Elongation factor 1-gamma (EEF1G) from Sus scrofa (Pig).